A 576-amino-acid polypeptide reads, in one-letter code: MAEEEFSNTTHETFNFTLHTTLGVTTKLVLPTPAKPILPVQTGEQAQQEEQSSGMTIFFSLLVLAICIILVHLLIRYRLHFLPESVAVVSLGILMGAVIKVIEFKKLANWKEEEMFRPNMFFLLLLPPIIFESGYSLHKGNFFQNIGSITLFAVFGTAISAFVVGGGIYFLGQADVISKLNMTDSFAFGSLISAVDPVATIAIFNALHVDPVLNMLVFGESILNDAVSIVLTNTAEGLTRKHMSDVSGWQTFSQALGYFLKMFFGSAALGTLTGLISALVLKHIDLRKTPSLEFGMMIIFAYLPYGLAEGISLSGIMAILFSGIVMSHYTHHNLSPVTQILMQQTLRTVAFLCETCVFAFLGLSIFSFPHKFEISFVIWCIVLVLFGRAVNIFPLSYLLNFFRDHKITPKMMFIMWFSGLRGAIPYALSLHLGLEPMEKRQLIGTTTIVIVLFTILLLGGSTMPLIRLVDIEDARARRRSKKDVNLSKTEKMGNAIESEHLSELTEEEYEAHYIRQQDLKGFMWLDAKYLNPFFTRRLTQEDLHHGRIQMKSLTNKWYEEVRQGPSGSEDDEQELF.

The next 11 membrane-spanning stretches (helical) occupy residues 55–75, 79–99, 118–138, 151–171, 186–206, 256–276, 306–326, 349–369, 374–394, 412–432, and 446–466; these read MTIF…HLLI, LHFL…GAVI, PNMF…YSLH, LFAV…IYFL, FAFG…IFNA, LGYF…TGLI, GLAE…GIVM, VAFL…FSFP, ISFV…NIFP, MFIM…SLHL, and TTIV…MPLI. Position 505 is a phosphothreonine (Thr505). Ser566 and Ser568 each carry phosphoserine.

The protein belongs to the monovalent cation:proton antiporter 1 (CPA1) transporter (TC 2.A.36) family. Predominantly expressed in the liver, skeletal muscle, kidney, and testis. Expressed in both renal cortex and medulla. Detected throughout the entire gastrointestinal tract, with high expression detected in stomach, duodenum and ascending colon. In gastric epithelium; expressed in the glands within the fundus and pylorus regions.

It is found in the golgi apparatus membrane. It localises to the golgi apparatus. The protein resides in the trans-Golgi network membrane. Its subcellular location is the endosome. The protein localises to the multivesicular body membrane. It is found in the apical cell membrane. It localises to the cytoplasmic vesicle. The protein resides in the secretory vesicle. Its subcellular location is the acrosome. The enzyme catalyses Na(+)(in) + H(+)(out) = Na(+)(out) + H(+)(in). Functionally, na(+)/H(+) antiporter. Mediates the electoneutral exchange of intracellular H(+) ions for extracellular Na(+) in 1:1 stoichiometry. Acts as an Na(+)/H(+) exchanger in the trans-Golgi. Contributes to the regulation of pH regulation of Golgi apparatus, and consequently, in protein trafficking and endosomal morphology. Plays a crucial role in germ cells in acrosome biogenesis and sperm development, probably by playing a role in the fusion of the Golgi-derived vesicles that form the acrosomal cap. Can also be active at the cell surface of specialized cells. In the small intestine, plays a major physiological role in transepithelial absorption of Na(+). Regulates intracellular pH homeostasis of intestinal epithelial cells. Acts as an important regulator of mucosal integrity in the intestine and in the stomach, could mediate the pH fluctuation necessary for mucin exocytosis or assist membrane trafficking of other proteins. Plays a role in photoreceptor survival and in the maintenance of intracellular pH homeostasis in retinal pigment epithelium (RPE cells). In Mus musculus (Mouse), this protein is Sodium/hydrogen exchanger 8 (Slc9a8).